The chain runs to 129 residues: Small ribosomal subunit protein uS11 (129 aa).

Belongs to the universal ribosomal protein uS11 family. In terms of assembly, part of the 30S ribosomal subunit. Interacts with proteins S7 and S18. Binds to IF-3.

Located on the platform of the 30S subunit, it bridges several disparate RNA helices of the 16S rRNA. Forms part of the Shine-Dalgarno cleft in the 70S ribosome. The chain is Small ribosomal subunit protein uS11 from Pectobacterium atrosepticum (strain SCRI 1043 / ATCC BAA-672) (Erwinia carotovora subsp. atroseptica).